Consider the following 1027-residue polypeptide: D-2-hydroxyglutarate dehydrogenase (1027 aa).

An FAD-binding PCMH-type domain is found at 48 to 284 (YQQLPQAILF…CEAKLNLLLI (237 aa)). Positions 405 and 503 each coordinate (R)-2-hydroxyglutarate. In terms of domain architecture, 4Fe-4S ferredoxin-type spans 665-696 (HEVKAAMDTCLACKACASQCPIKIDVPSFRAK). The [4Fe-4S] cluster site is built by Cys674, Cys677, Cys680, and Cys684.

In the N-terminal section; belongs to the FAD-binding oxidoreductase/transferase type 4 family. Homotetramer. [4Fe-4S] cluster serves as cofactor. It depends on FAD as a cofactor.

It catalyses the reaction (R)-2-hydroxyglutarate + A = 2-oxoglutarate + AH2. Its function is as follows. Catalyzes the oxidation of D-2-hydroxyglutarate (D-2-HGA) to 2-oxoglutarate. Provides the way to recycle D-2-HGA produced during L-serine synthesis by SerA, by converting it back to 2-oxoglutarate. The physiological molecule that functions as the primary electron acceptor during D-2-HGA oxidation is unknown. The polypeptide is D-2-hydroxyglutarate dehydrogenase (Haemophilus influenzae (strain ATCC 51907 / DSM 11121 / KW20 / Rd)).